A 308-amino-acid polypeptide reads, in one-letter code: tRNA pseudouridine synthase B (308 aa).

Catalysis depends on aspartate 45, which acts as the Nucleophile.

The protein belongs to the pseudouridine synthase TruB family. Type 1 subfamily.

The catalysed reaction is uridine(55) in tRNA = pseudouridine(55) in tRNA. Functionally, responsible for synthesis of pseudouridine from uracil-55 in the psi GC loop of transfer RNAs. The sequence is that of tRNA pseudouridine synthase B from Gloeothece citriformis (strain PCC 7424) (Cyanothece sp. (strain PCC 7424)).